The chain runs to 243 residues: MCSRGWDSCLALELLLLPLSLLVTSIQGHLVHMTVVSGSNVTLNISESLPENYKQLTWFYTFDQKIVEWDSRKSKYFESKFKGRVRLDPQSGALYISKVQKEDNSTYIMRVLKKTGNEQEWKIKLQVLDPVPKPVIKIEKIEDMDDNCYLKLSCVIPGESVNYTWYGDKRPFPKELQNSVLETTLMPHNYSRCYTCQVSNSVSSKNGTVCLSPPCTLARSFGVEWIASWLVVTVPTILGLLLT.

An N-terminal signal peptide occupies residues 1 to 26 (MCSRGWDSCLALELLLLPLSLLVTSI). Ig-like C2-type domains lie at 29-127 (HLVH…KLQV) and 132-212 (PKPV…VCLS). N-linked (GlcNAc...) asparagine glycans are attached at residues Asn-40, Asn-44, Asn-104, Asn-162, and Asn-189. Cys-154 and Cys-196 are oxidised to a cystine. A lipid anchor (GPI-anchor amidated serine) is attached at Ser-220. The propeptide at 221–243 (FGVEWIASWLVVTVPTILGLLLT) is removed in mature form.

As to quaternary structure, interacts with CD2. Interacts with CD244; this interaction is possible not only on different cells (trans interaction) but also on the same cell (cis interaction). Interacts with LCK. Widely expressed on all hematopoietic cells.

Its subcellular location is the cell membrane. The protein localises to the membrane raft. It is found in the secreted. Functionally, glycosylphosphatidylinositol (GPI)-anchored cell surface glycoprotein that interacts via its N-terminal immunoglobulin domain with cell surface receptors including CD244/2B4 or CD2 to regulate immune cell function and activation. Participates in T-cell signaling transduction by associating with CD2 and efficiently bringing the Src family protein kinase LCK and LAT to the TCR/CD3 complex. In turn, promotes LCK phosphorylation and subsequent activation. Induces the phosphorylation of the cytoplasmic immunoreceptortyrosine switch motifs (ITSMs) of CD244 initiating a series of signaling events that leads to the generation of the immunological synapse and the directed release of cytolytic granules containing perforin and granzymes by T-lymphocytes and NK-cells. This chain is CD48 antigen (CD48), found in Homo sapiens (Human).